Here is a 191-residue protein sequence, read N- to C-terminus: Putative endogenous retrovirus group K member 11-1 Env polyprotein (191 aa).

The segment at 1 to 191 is truncated surface protein; the sequence is MPGAIDDHCP…DITLHPQGLV (191 aa).

Belongs to the beta type-B retroviral envelope protein family. HERV class-II K(HML-8) env subfamily. Cerebellum and testis.

The protein localises to the virion. Retroviral envelope proteins mediate receptor recognition and membrane fusion during early infection. Endogenous envelope proteins may have kept, lost or modified their original function during evolution. This is Putative endogenous retrovirus group K member 11-1 Env polyprotein (ERVK11-1) from Homo sapiens (Human).